A 536-amino-acid chain; its full sequence is Aminopeptidase (536 aa).

The signal sequence occupies residues 1-24; that stretch reads MSNKNNLRYALGALALSVSAASLA. One can recognise a PA domain in the interval 152 to 255; the sequence is AGDVTAKVVP…ATYDNGVAWS (104 aa). A Phosphothreonine modification is found at threonine 196. Positions 296 and 308 each coordinate Zn(2+). The active-site Proton acceptor is the glutamate 340. Zn(2+) is bound by residues glutamate 341, aspartate 369, and histidine 467. Cysteine 465 and cysteine 470 are disulfide-bonded.

It belongs to the peptidase M28 family. M28A subfamily. Requires Zn(2+) as cofactor.

The protein localises to the secreted. The catalysed reaction is Release of an N-terminal amino acid, Xaa-|-Yaa-, in which Xaa is preferably Leu, but may be other amino acids including Pro although not Arg or Lys, and Yaa may be Pro. Amino acid amides and methyl esters are also readily hydrolyzed, but rates on arylamides are exceedingly low.. In terms of biological role, a secreted aminopeptidase. Acts on free N-terminal amino groups with a very strong preference for Leu in the first position. The chain is Aminopeptidase from Pseudomonas aeruginosa (strain UCBPP-PA14).